We begin with the raw amino-acid sequence, 207 residues long: Thiamine-phosphate synthase (207 aa).

4-amino-2-methyl-5-(diphosphooxymethyl)pyrimidine contacts are provided by residues 36-40 and Asp-68; that span reads QMRIK. Residues Asp-69 and Asp-88 each coordinate Mg(2+). 4-amino-2-methyl-5-(diphosphooxymethyl)pyrimidine is bound at residue Ser-106. 132–134 is a binding site for 2-[(2R,5Z)-2-carboxy-4-methylthiazol-5(2H)-ylidene]ethyl phosphate; the sequence is TKT. Lys-135 is a binding site for 4-amino-2-methyl-5-(diphosphooxymethyl)pyrimidine. 2-[(2R,5Z)-2-carboxy-4-methylthiazol-5(2H)-ylidene]ethyl phosphate-binding positions include Gly-162 and 182 to 183; that span reads IS.

This sequence belongs to the thiamine-phosphate synthase family. The cofactor is Mg(2+).

The catalysed reaction is 2-[(2R,5Z)-2-carboxy-4-methylthiazol-5(2H)-ylidene]ethyl phosphate + 4-amino-2-methyl-5-(diphosphooxymethyl)pyrimidine + 2 H(+) = thiamine phosphate + CO2 + diphosphate. It carries out the reaction 2-(2-carboxy-4-methylthiazol-5-yl)ethyl phosphate + 4-amino-2-methyl-5-(diphosphooxymethyl)pyrimidine + 2 H(+) = thiamine phosphate + CO2 + diphosphate. The enzyme catalyses 4-methyl-5-(2-phosphooxyethyl)-thiazole + 4-amino-2-methyl-5-(diphosphooxymethyl)pyrimidine + H(+) = thiamine phosphate + diphosphate. The protein operates within cofactor biosynthesis; thiamine diphosphate biosynthesis; thiamine phosphate from 4-amino-2-methyl-5-diphosphomethylpyrimidine and 4-methyl-5-(2-phosphoethyl)-thiazole: step 1/1. Functionally, condenses 4-methyl-5-(beta-hydroxyethyl)thiazole monophosphate (THZ-P) and 2-methyl-4-amino-5-hydroxymethyl pyrimidine pyrophosphate (HMP-PP) to form thiamine monophosphate (TMP). The polypeptide is Thiamine-phosphate synthase (Pyrococcus furiosus (strain ATCC 43587 / DSM 3638 / JCM 8422 / Vc1)).